Reading from the N-terminus, the 153-residue chain is NAD(P)H-quinone oxidoreductase subunit N (153 aa).

This sequence belongs to the complex I NdhN subunit family. NDH-1 can be composed of about 15 different subunits; different subcomplexes with different compositions have been identified which probably have different functions.

The protein resides in the cellular thylakoid membrane. It catalyses the reaction a plastoquinone + NADH + (n+1) H(+)(in) = a plastoquinol + NAD(+) + n H(+)(out). The enzyme catalyses a plastoquinone + NADPH + (n+1) H(+)(in) = a plastoquinol + NADP(+) + n H(+)(out). Functionally, NDH-1 shuttles electrons from an unknown electron donor, via FMN and iron-sulfur (Fe-S) centers, to quinones in the respiratory and/or the photosynthetic chain. The immediate electron acceptor for the enzyme in this species is believed to be plastoquinone. Couples the redox reaction to proton translocation, and thus conserves the redox energy in a proton gradient. Cyanobacterial NDH-1 also plays a role in inorganic carbon-concentration. This is NAD(P)H-quinone oxidoreductase subunit N from Synechococcus sp. (strain CC9605).